A 396-amino-acid polypeptide reads, in one-letter code: Tryptophan synthase beta chain (396 aa).

Lysine 88 carries the N6-(pyridoxal phosphate)lysine modification.

The protein belongs to the TrpB family. As to quaternary structure, tetramer of two alpha and two beta chains. It depends on pyridoxal 5'-phosphate as a cofactor.

It carries out the reaction (1S,2R)-1-C-(indol-3-yl)glycerol 3-phosphate + L-serine = D-glyceraldehyde 3-phosphate + L-tryptophan + H2O. It functions in the pathway amino-acid biosynthesis; L-tryptophan biosynthesis; L-tryptophan from chorismate: step 5/5. The beta subunit is responsible for the synthesis of L-tryptophan from indole and L-serine. This chain is Tryptophan synthase beta chain, found in Shewanella sp. (strain W3-18-1).